We begin with the raw amino-acid sequence, 879 residues long: Alanine--tRNA ligase (879 aa).

Residues His566, His570, Cys668, and His672 each coordinate Zn(2+).

This sequence belongs to the class-II aminoacyl-tRNA synthetase family. Zn(2+) serves as cofactor.

It localises to the cytoplasm. It carries out the reaction tRNA(Ala) + L-alanine + ATP = L-alanyl-tRNA(Ala) + AMP + diphosphate. Its function is as follows. Catalyzes the attachment of alanine to tRNA(Ala) in a two-step reaction: alanine is first activated by ATP to form Ala-AMP and then transferred to the acceptor end of tRNA(Ala). Also edits incorrectly charged Ser-tRNA(Ala) and Gly-tRNA(Ala) via its editing domain. The sequence is that of Alanine--tRNA ligase from Clostridium botulinum (strain Loch Maree / Type A3).